Consider the following 128-residue polypeptide: Fluoride-specific ion channel FluC (128 aa).

The next 4 membrane-spanning stretches (helical) occupy residues 2–22 (FYSI…RWCL), 35–55 (LGTL…AVVF), 67–87 (LFVI…SVEV), and 96–116 (FGWA…LTAL). Residues glycine 75 and threonine 78 each coordinate Na(+).

This sequence belongs to the fluoride channel Fluc/FEX (TC 1.A.43) family.

Its subcellular location is the cell inner membrane. It catalyses the reaction fluoride(in) = fluoride(out). Its activity is regulated as follows. Na(+) is not transported, but it plays an essential structural role and its presence is essential for fluoride channel function. Functionally, fluoride-specific ion channel. Important for reducing fluoride concentration in the cell, thus reducing its toxicity. In Burkholderia cenocepacia (strain ATCC BAA-245 / DSM 16553 / LMG 16656 / NCTC 13227 / J2315 / CF5610) (Burkholderia cepacia (strain J2315)), this protein is Fluoride-specific ion channel FluC.